Consider the following 533-residue polypeptide: MNNQDDRIIIFDTTLRDGEQSPGATLNGDEKLAIARALARLGVDVIEAGFPRASRGDFDAVQRIAAEVGTENGPTICGLARATKGDIEAAGNALKPAFSNRIHTFIATSDIHLEYKLRKSRKDVLAIAPEMVAYAKTFTNDVEFSPEDAGRSDPEFLYQILEAVIDAGATTVNIPDTVGYTTPAEFGALIKGIKENVPNIDRAIISVHGHNDLGLAVANFLEAVKNGARQLECTINGIGERAGNAALEELVMALHVRRQYYNPFLGRPADSEAPLTSINTKEIYKTSRLVSNLTGLSVQANKAIVGLNAFAHESGIHQDGVLKNKLTYEIMDAQSIGLTDNQIILGKHSGRNAFRTRLAELGFDLSDNDLNKAFLRFKDLADKKKEITDWDLEAIVKDETQQPPELFRLELVQVSCGDHAQPTATITIRTPGGKELTDAAIGTGPVDAIYKAINRVVQVPNELIEYSVQSVTAGIDAIGEVTIRLRHEGRIYSGHAANTDIVVASARAYISALNRLYAALQEDVSANPAKASL.

The Pyruvate carboxyltransferase domain maps to 8-269 (IIIFDTTLRD…YYNPFLGRPA (262 aa)). Residues aspartate 17, histidine 208, histidine 210, and asparagine 244 each coordinate Mn(2+). A regulatory domain region spans residues 408-533 (RLELVQVSCG…VSANPAKASL (126 aa)).

The protein belongs to the alpha-IPM synthase/homocitrate synthase family. LeuA type 1 subfamily. In terms of assembly, homodimer. Mn(2+) serves as cofactor.

The protein localises to the cytoplasm. The enzyme catalyses 3-methyl-2-oxobutanoate + acetyl-CoA + H2O = (2S)-2-isopropylmalate + CoA + H(+). Its pathway is amino-acid biosynthesis; L-leucine biosynthesis; L-leucine from 3-methyl-2-oxobutanoate: step 1/4. Catalyzes the condensation of the acetyl group of acetyl-CoA with 3-methyl-2-oxobutanoate (2-ketoisovalerate) to form 3-carboxy-3-hydroxy-4-methylpentanoate (2-isopropylmalate). The chain is 2-isopropylmalate synthase from Picosynechococcus sp. (strain ATCC 27264 / PCC 7002 / PR-6) (Agmenellum quadruplicatum).